The chain runs to 322 residues: Ribonuclease Z (322 aa).

Zn(2+) contacts are provided by His62, His64, Asp66, His67, His139, Asp210, and His268. The active-site Proton acceptor is the Asp66.

Belongs to the RNase Z family. Homodimer. The cofactor is Zn(2+).

The enzyme catalyses Endonucleolytic cleavage of RNA, removing extra 3' nucleotides from tRNA precursor, generating 3' termini of tRNAs. A 3'-hydroxy group is left at the tRNA terminus and a 5'-phosphoryl group is left at the trailer molecule.. Functionally, zinc phosphodiesterase, which displays some tRNA 3'-processing endonuclease activity. Probably involved in tRNA maturation, by removing a 3'-trailer from precursor tRNA. The protein is Ribonuclease Z of Nostoc sp. (strain PCC 7120 / SAG 25.82 / UTEX 2576).